The sequence spans 321 residues: MATH domain and coiled-coil domain-containing protein At3g58260 (321 aa).

An MATH domain is found at 6 to 135 (NNTFTWVIKN…NDEVMVAVAV (130 aa)). A coiled-coil region spans residues 232-283 (KLDWLEKKLDELFEKKKEEADKIRMQNIEEELKDLRQKCSSLEALLKKEKTG).

This chain is MATH domain and coiled-coil domain-containing protein At3g58260, found in Arabidopsis thaliana (Mouse-ear cress).